The primary structure comprises 38 residues: Large ribosomal subunit protein bL36 (38 aa).

Belongs to the bacterial ribosomal protein bL36 family.

In Fervidobacterium nodosum (strain ATCC 35602 / DSM 5306 / Rt17-B1), this protein is Large ribosomal subunit protein bL36.